We begin with the raw amino-acid sequence, 424 residues long: Tyrosine--tRNA ligase (424 aa).

Tyr37 contacts L-tyrosine. A 'HIGH' region motif is present at residues Pro42–His51. Position 144 is an N6-acetyllysine (Lys144). Tyr175 and Gln179 together coordinate L-tyrosine. Residues Lys235–Thr239 carry the 'KMSKS' region motif. Lys238 provides a ligand contact to ATP. Residues Ala357–Gly414 enclose the S4 RNA-binding domain.

Belongs to the class-I aminoacyl-tRNA synthetase family. TyrS type 1 subfamily. Homodimer.

It localises to the cytoplasm. The catalysed reaction is tRNA(Tyr) + L-tyrosine + ATP = L-tyrosyl-tRNA(Tyr) + AMP + diphosphate + H(+). Its function is as follows. Catalyzes the attachment of tyrosine to tRNA(Tyr) in a two-step reaction: tyrosine is first activated by ATP to form Tyr-AMP and then transferred to the acceptor end of tRNA(Tyr). The chain is Tyrosine--tRNA ligase from Escherichia fergusonii (strain ATCC 35469 / DSM 13698 / CCUG 18766 / IAM 14443 / JCM 21226 / LMG 7866 / NBRC 102419 / NCTC 12128 / CDC 0568-73).